Reading from the N-terminus, the 350-residue chain is Peptide-N(4)-(N-acetyl-beta-glucosaminyl)asparagine amidase (350 aa).

Residues Cys123, Cys126, Cys157, and Cys160 each coordinate Zn(2+). Cys183 serves as the catalytic Nucleophile. Residues His210 and Asp227 contribute to the active site. Glu230 serves as a coordination point for substrate. Residues 324–350 (EIPPAAGAAGRQSGSADWKRQRGEDGR) are disordered. The span at 340–350 (DWKRQRGEDGR) shows a compositional bias: basic and acidic residues.

It belongs to the transglutaminase-like superfamily. PNGase family. Zn(2+) serves as cofactor.

The protein resides in the cytoplasm. The enzyme catalyses Hydrolysis of an N(4)-(acetyl-beta-D-glucosaminyl)asparagine residue in which the glucosamine residue may be further glycosylated, to yield a (substituted) N-acetyl-beta-D-glucosaminylamine and a peptide containing an aspartate residue.. Functionally, specifically deglycosylates the denatured form of N-linked glycoproteins in the cytoplasm and assists their proteasome-mediated degradation. Cleaves the beta-aspartyl-glucosamine (GlcNAc) of the glycan and the amide side chain of Asn, converting Asn to Asp. Prefers proteins containing high-mannose over those bearing complex type oligosaccharides. Can recognize misfolded proteins in the endoplasmic reticulum that are exported to the cytosol to be destroyed and deglycosylate them, while it has no activity toward native proteins. Deglycosylation is a prerequisite for subsequent proteasome-mediated degradation of some, but not all, misfolded glycoproteins. This chain is Peptide-N(4)-(N-acetyl-beta-glucosaminyl)asparagine amidase (PNG1), found in Eremothecium gossypii (strain ATCC 10895 / CBS 109.51 / FGSC 9923 / NRRL Y-1056) (Yeast).